The following is a 343-amino-acid chain: Polyprenyl transferase spyF (343 aa).

8 consecutive transmembrane segments (helical) span residues 38-58 (WLAV…SHPL), 62-82 (VSVW…PASI), 92-112 (LLCL…NDWI), 138-158 (GFIW…STIL), 170-190 (LYIY…AIGW), 241-261 (AYVA…GLVL), 273-293 (SGWL…HQLL), and 311-331 (FALG…SSGM).

It belongs to the UbiA prenyltransferase family. It depends on Mg(2+) as a cofactor.

It is found in the membrane. It carries out the reaction triacetate lactone + (2E,6E,10E)-geranylgeranyl diphosphate = (2E,6E,10E)-geranylgeranyl-triacetate lactone + diphosphate. The protein operates within secondary metabolite biosynthesis; terpenoid biosynthesis. In terms of biological role, polyprenyl transferase; part of the gene cluster that mediates the biosynthesis of meroterpenoids called sartorypyrones. Within the pathway, spyF catalyzes the prenylation of triacetic acid lactone (TAL) to produce geranylgeranyl-triacetate lactone. The biosynthesis of sartorypyrones begins with the production of triacetic acid lactone (TAL) by the NR-PKS spyA using one molecule of acetyl-CoA and two molecules of malonyl-CoA. The prenyltransferase spyF then conjugates geranylgeranyl pyrophosphate (GGPP) to TAL to form geranylgeranyl-triacetate lactone, for which the pathway-specific geranylgeranyl pyrophosphate synthase (GGPS) spyE is required to provide GGPP. Subsequently, geranylgeranyl-triacetate lactone is epoxidized at the terminal olein by the FAD-dependent monooxygenase spyC, followed by cyclization of the terpenoid component catalyzed by the terpene cyclase spyD to produce both the bicyclic sartorypyrone F and the monocyclic sartorypyrone D. Finally, the last step of the biosynthesis involves the acetylation of the meroterpenoids sartorypyrones D and F by the acetyltransferase SpyB to produce sartorypyrones A and G, respectively. This is Polyprenyl transferase spyF from Aspergillus fumigatus (strain ATCC MYA-4609 / CBS 101355 / FGSC A1100 / Af293) (Neosartorya fumigata).